The primary structure comprises 1536 residues: Tyrosine-protein kinase BAZ1B (1536 aa).

One can recognise a WAC domain in the interval 25 to 130; sequence EVYTIEHTKE…GEKCDLMVGN (106 aa). Disordered stretches follow at residues 144 to 207, 304 to 470, and 557 to 579; these read LENP…TTMK, PSTK…GKPF, and LREK…SRRY. Basic and acidic residues-rich tracts occupy residues 151–196 and 334–343; these read NAEK…DRAR and AKGDKKKNKD. Polar residues predominate over residues 344-355; that stretch reads SQNIPLSPTIWS. Residues 392 to 401 are compositionally biased toward basic and acidic residues; sequence KQGDKKSSDP. A compositionally biased stretch (low complexity) spans 443–452; that stretch reads AKSPAAAGSP. Residues 515–583 adopt a coiled-coil conformation; the sequence is EELKELVQKR…EMSRRYEDQE (69 aa). In terms of domain architecture, DDT spans 603–667; sequence NTIFGDVAMV…LQTLLQDELA (65 aa). 2 coiled-coil regions span residues 768–803 and 850–890; these read HQKS…METK and IQAK…FQDA. Residues 785–832 are compositionally biased toward basic and acidic residues; the sequence is ANDRKRAEKQKRKEQMETKTDGDVLIKAEKKKESTVKKETPKVLPKEE. Residues 785–839 form a disordered region; the sequence is ANDRKRAEKQKRKEQMETKTDGDVLIKAEKKKESTVKKETPKVLPKEEPEPEDMI. The tract at residues 940–973 is disordered; it reads PPEEEPVLTEEEEEEEEVKKEEETEDGEKEDEGS. Acidic residues-rich tracts occupy residues 941-955 and 962-972; these read PEEE…EEEE and ETEDGEKEDEG. A PHD-type zinc finger spans residues 1202 to 1252; it reads NARCKVCRRKGEDDKLILCDECNKAFHLFCLRPALYRIPAGEWLCPACQPT. Disordered regions lie at residues 1256–1371 and 1477–1536; these read RSSR…KDVE and LRRR…TKQK. Residues 1261–1293 adopt a coiled-coil conformation; it reads RNYKEDSEEEEDSEEEDEEESEEEDSEEEHRNT. Acidic residues predominate over residues 1266–1287; the sequence is DSEEEEDSEEEDEEESEEEDSE. Residues 1297–1316 show a composition bias toward basic residues; sequence LRSRKKVKTSSKSKMQKKPA. The span at 1325-1350 shows a compositional bias: low complexity; it reads KTDTNPSKTSPKSSAKPKSRAAPSSP. The residue at position 1349 (serine 1349) is a Phosphoserine. One can recognise a Bromo domain in the interval 1366 to 1470; it reads RKKDVELQKC…EAFVELLQKS (105 aa). A compositionally biased stretch (acidic residues) spans 1491–1502; it reads NSDDDDDDEEED. Residues 1506-1524 are compositionally biased toward basic residues; it reads KKQKNGKQGKKASSKRKVE. Residues 1525-1536 are compositionally biased toward basic and acidic residues; it reads HSRTEKYQTKQK.

Belongs to the WAL family. BAZ1B subfamily. As to quaternary structure, interacts with smarca5/snf2h; the interaction is direct and forms the WICH complex. Component of the B-WICH complex. The cofactor is Mn(2+).

The protein localises to the nucleus. It catalyses the reaction L-tyrosyl-[protein] + ATP = O-phospho-L-tyrosyl-[protein] + ADP + H(+). In terms of biological role, atypical tyrosine-protein kinase that plays a central role in chromatin remodeling and acts as a transcription regulator. Involved in DNA damage response by phosphorylating 'Tyr-142' of histone H2AX (H2AXY142ph). H2AXY142ph plays a central role in DNA repair and acts as a mark that distinguishes between apoptotic and repair responses to genotoxic stress. Essential component of the WICH complex, a chromatin remodeling complex that mobilizes nucleosomes and reconfigures irregular chromatin to a regular nucleosomal array structure. The WICH complex regulates the transcription of various genes, has a role in RNA polymerase I and RNA polymerase III transcription, mediates the histone H2AX phosphorylation at 'Tyr-142', and is involved in the maintenance of chromatin structures during DNA replication processes. The sequence is that of Tyrosine-protein kinase BAZ1B (baz1b) from Danio rerio (Zebrafish).